Reading from the N-terminus, the 93-residue chain is Neutrophil cationic peptide 1 type A (93 aa).

A signal peptide spans 1-19; sequence MRTVPLFAACLLLTLMAQA. Positions 20 to 62 are excised as a propeptide; the sequence is EPLPRAADHSDTKMKGDREDHVAVISFWEEESTSLEDAGAGAG. 3 disulfide bridges follow: C65–C93, C67–C82, and C72–C92.

This sequence belongs to the alpha-defensin family.

The protein localises to the secreted. Functionally, has antibiotic, anti-fungi and antiviral activity. This is Neutrophil cationic peptide 1 type A from Cavia porcellus (Guinea pig).